Reading from the N-terminus, the 332-residue chain is MPPTVNMGIPGASRSIVENLKRKRVLLAEPRGYCAGVDRAVETVERSLRKYGPPVYVRHEIVHNRHVVETLERAGAVFVEETDYVPEGAIVIFSAHGVAPTVYAAAAERNLRTIDATCPLVTKVHNEVKRFARNDYDILLIGHEGHEEVIATAGEAPTHVQLVDGLAAVQQVVVRDENKVVWLSQTTLSVDETMRIVERLRQRFPKLQDPPSDDICYATQNRQVAVKAMAPECELVIVVGSRNSSNSVRLVEVAMGSGAGAAYLVDWAKDIDPAWLAGVTTVGVTSGASVPDILVQGVLKWLAERGYDVVQSVTTANEALVFALPREIRSAH.

C34 is a binding site for [4Fe-4S] cluster. (2E)-4-hydroxy-3-methylbut-2-enyl diphosphate-binding residues include H63 and H96. H63 and H96 together coordinate dimethylallyl diphosphate. H63 and H96 together coordinate isopentenyl diphosphate. Position 118 (C118) interacts with [4Fe-4S] cluster. H146 is a (2E)-4-hydroxy-3-methylbut-2-enyl diphosphate binding site. H146 contributes to the dimethylallyl diphosphate binding site. Residue H146 coordinates isopentenyl diphosphate. The Proton donor role is filled by E148. A (2E)-4-hydroxy-3-methylbut-2-enyl diphosphate-binding site is contributed by T186. C216 contacts [4Fe-4S] cluster. (2E)-4-hydroxy-3-methylbut-2-enyl diphosphate is bound by residues S244, S245, N246, and S289. Residues S244, S245, N246, and S289 each coordinate dimethylallyl diphosphate. Isopentenyl diphosphate-binding residues include S244, S245, N246, and S289.

It belongs to the IspH family. [4Fe-4S] cluster is required as a cofactor.

The catalysed reaction is isopentenyl diphosphate + 2 oxidized [2Fe-2S]-[ferredoxin] + H2O = (2E)-4-hydroxy-3-methylbut-2-enyl diphosphate + 2 reduced [2Fe-2S]-[ferredoxin] + 2 H(+). It carries out the reaction dimethylallyl diphosphate + 2 oxidized [2Fe-2S]-[ferredoxin] + H2O = (2E)-4-hydroxy-3-methylbut-2-enyl diphosphate + 2 reduced [2Fe-2S]-[ferredoxin] + 2 H(+). It participates in isoprenoid biosynthesis; dimethylallyl diphosphate biosynthesis; dimethylallyl diphosphate from (2E)-4-hydroxy-3-methylbutenyl diphosphate: step 1/1. The protein operates within isoprenoid biosynthesis; isopentenyl diphosphate biosynthesis via DXP pathway; isopentenyl diphosphate from 1-deoxy-D-xylulose 5-phosphate: step 6/6. Its function is as follows. Catalyzes the conversion of 1-hydroxy-2-methyl-2-(E)-butenyl 4-diphosphate (HMBPP) into a mixture of isopentenyl diphosphate (IPP) and dimethylallyl diphosphate (DMAPP). Acts in the terminal step of the DOXP/MEP pathway for isoprenoid precursor biosynthesis. This chain is 4-hydroxy-3-methylbut-2-enyl diphosphate reductase, found in Mycobacterium leprae (strain TN).